The primary structure comprises 381 residues: Early boundary activity protein 2 (381 aa).

The disordered stretch occupies residues asparagine 210 to lysine 245. Residues proline 268 to tyrosine 365 enclose the BEN domain.

The heterotrimeric Elba complex consists of Elba1, Elba2 and Elba3.

It is found in the nucleus. Functionally, the heterotrimeric Elba complex is required for chromatin domain boundary function during early embryogenesis. It binds to a 8-bp sequence 5'-CCAATAAG-3' in the Fab-7 insulator or boundary element in the bithorax complex and contributes to its insulator or boundary activity. Elba2 can act as a transcriptional repressor and binds the palindromic sequence 5'-CCAATTGG-3' to mediate transcriptional repression. This is Early boundary activity protein 2 from Drosophila melanogaster (Fruit fly).